Here is a 545-residue protein sequence, read N- to C-terminus: tRNA-2-methylthio-N(6)-dimethylallyladenosine synthase (545 aa).

The interval Met-1–Thr-32 is disordered. In terms of domain architecture, MTTase N-terminal spans Arg-58 to His-174. Residues Cys-67, Cys-103, Cys-137, Cys-211, Cys-215, and Cys-218 each coordinate [4Fe-4S] cluster. A Radical SAM core domain is found at Arg-197–Glu-433. The TRAM domain occupies Arg-436 to Val-504.

This sequence belongs to the methylthiotransferase family. MiaB subfamily. In terms of assembly, monomer. Requires [4Fe-4S] cluster as cofactor.

It localises to the cytoplasm. The enzyme catalyses N(6)-dimethylallyladenosine(37) in tRNA + (sulfur carrier)-SH + AH2 + 2 S-adenosyl-L-methionine = 2-methylsulfanyl-N(6)-dimethylallyladenosine(37) in tRNA + (sulfur carrier)-H + 5'-deoxyadenosine + L-methionine + A + S-adenosyl-L-homocysteine + 2 H(+). Functionally, catalyzes the methylthiolation of N6-(dimethylallyl)adenosine (i(6)A), leading to the formation of 2-methylthio-N6-(dimethylallyl)adenosine (ms(2)i(6)A) at position 37 in tRNAs that read codons beginning with uridine. The chain is tRNA-2-methylthio-N(6)-dimethylallyladenosine synthase from Mycobacterium bovis (strain BCG / Pasteur 1173P2).